Reading from the N-terminus, the 428-residue chain is 3-phosphoshikimate 1-carboxyvinyltransferase (428 aa).

Residues K23, S24, and R28 each contribute to the 3-phosphoshikimate site. K23 is a binding site for phosphoenolpyruvate. Residues G97 and R125 each contribute to the phosphoenolpyruvate site. 3-phosphoshikimate-binding residues include S170, S171, Q172, S198, D314, N337, and K341. Residue Q172 coordinates phosphoenolpyruvate. The active-site Proton acceptor is the D314. 3 residues coordinate phosphoenolpyruvate: R345, R387, and K412.

The protein belongs to the EPSP synthase family. Monomer.

It localises to the cytoplasm. The catalysed reaction is 3-phosphoshikimate + phosphoenolpyruvate = 5-O-(1-carboxyvinyl)-3-phosphoshikimate + phosphate. It functions in the pathway metabolic intermediate biosynthesis; chorismate biosynthesis; chorismate from D-erythrose 4-phosphate and phosphoenolpyruvate: step 6/7. Functionally, catalyzes the transfer of the enolpyruvyl moiety of phosphoenolpyruvate (PEP) to the 5-hydroxyl of shikimate-3-phosphate (S3P) to produce enolpyruvyl shikimate-3-phosphate and inorganic phosphate. The chain is 3-phosphoshikimate 1-carboxyvinyltransferase from Buchnera aphidicola subsp. Schizaphis graminum (strain Sg).